We begin with the raw amino-acid sequence, 1096 residues long: Lysine-specific demethylase PHF2 (1096 aa).

The PHD-type zinc finger occupies 5–56 (PVYCVCRLPYDVTRFMIECDACKDWFHGSCVGVEEEEAPDIDIYHCPNCEKT). 2-oxoglutarate is bound by residues Thr-193 and Thr-246. In terms of domain architecture, JmjC spans 197-353 (FSDTRMSSFV…MQMRAYEVER (157 aa)). Fe cation is bound by residues His-249 and Asp-251. Residues Tyr-259 and Lys-266 each contribute to the 2-oxoglutarate site. A Fe cation-binding site is contributed by Tyr-321. Thr-323 contacts 2-oxoglutarate. Residues 448–630 (TVRPEVNAAA…KSPLAGNKDK (183 aa)) form a disordered region. Residue Ser-474 is modified to Phosphoserine. Thr-479 carries the phosphothreonine modification. The segment covering 503–515 (SKIPKPPKSPKPP) has biased composition (pro residues). Residue Ser-536 is modified to Phosphoserine. Composition is skewed to basic and acidic residues over residues 545–560 (LEAH…EPPK) and 575–630 (DTVH…NKDK). A phosphoserine mark is found at Ser-651, Ser-677, and Ser-701. Lys-707 participates in a covalent cross-link: Glycyl lysine isopeptide (Lys-Gly) (interchain with G-Cter in SUMO2). Lys-716 is subject to N6-acetyllysine. Disordered regions lie at residues 719 to 755 (LDSA…ESGS), 811 to 841 (WGTG…KRLL), and 871 to 1080 (YPSL…TAKQ). Position 724 is a phosphotyrosine (Tyr-724). Positions 725–753 (KSDDSSDEGSLHIDTDTKPGRNAKVKKES) are enriched in basic and acidic residues. A phosphoserine mark is found at Ser-726, Ser-729, Ser-730, and Ser-734. Ser-873, Ser-876, and Ser-893 each carry phosphoserine. Basic and acidic residues predominate over residues 910–919 (RQDRPVREGT). A compositionally biased stretch (basic residues) spans 943 to 953 (NRKKKNTKRKP). The segment covering 954-1010 (APNTASPSISTSASASTGTTSASTTPASTTPASTTPASTTPASTSTASSQASQEGSS) has biased composition (low complexity). Composition is skewed to polar residues over residues 1031 to 1040 (GTFSGSQAGR) and 1054 to 1065 (RRPSASSPNNTA). Position 1057 is a phosphoserine; by PKA (Ser-1057).

Belongs to the JHDM1 histone demethylase family. JHDM1D subfamily. As to quaternary structure, component of the PHF2-ARID5B complex, at least composed of PHF2 and ARID5B. Interacts with HNF4A and NR1H4. Interacts with RELA. In terms of processing, phosphorylated by PKA on specific serine residues, leading to the formation of an active lysine demethylase complex.

The protein localises to the nucleus. The protein resides in the nucleolus. It localises to the chromosome. It is found in the centromere. Its subcellular location is the kinetochore. The enzyme catalyses N(6),N(6)-dimethyl-L-lysyl(9)-[histone H3] + 2-oxoglutarate + O2 = N(6)-methyl-L-lysyl(9)-[histone H3] + formaldehyde + succinate + CO2. Enzymatically inactive by itself, and become active following phosphorylation by PKA. In terms of biological role, lysine demethylase that demethylates both histones and non-histone proteins. Enzymatically inactive by itself, and becomes active following phosphorylation by PKA: forms a complex with ARID5B and mediates demethylation of methylated ARID5B. Demethylation of ARID5B leads to target the PHF2-ARID5B complex to target promoters, where PHF2 mediates demethylation of dimethylated 'Lys-9' of histone H3 (H3K9me2), followed by transcription activation of target genes. The PHF2-ARID5B complex acts as a coactivator of HNF4A in liver. PHF2 is recruited to trimethylated 'Lys-4' of histone H3 (H3K4me3) at rDNA promoters and promotes expression of rDNA. Involved in the activation of toll-like receptor 4 (TLR4)-target inflammatory genes in macrophages by catalyzing the demethylation of trimethylated histone H4 lysine 20 (H4K20me3) at the gene promoters. The polypeptide is Lysine-specific demethylase PHF2 (Phf2) (Mus musculus (Mouse)).